Here is a 191-residue protein sequence, read N- to C-terminus: Phosphoheptose isomerase (191 aa).

The SIS domain occupies 34-191 (IATALKDGNK…LVEEMVCERS (158 aa)). A substrate-binding site is contributed by 49–51 (NGG). Residues His-58 and Glu-62 each coordinate Zn(2+). Substrate is bound by residues Glu-62, 91–92 (ND), 117–119 (TTS), Ser-122, and Gln-169. The Zn(2+) site is built by Gln-169 and His-177.

It belongs to the SIS family. GmhA subfamily. The cofactor is Zn(2+).

The protein resides in the cytoplasm. It carries out the reaction 2 D-sedoheptulose 7-phosphate = D-glycero-alpha-D-manno-heptose 7-phosphate + D-glycero-beta-D-manno-heptose 7-phosphate. Its pathway is carbohydrate biosynthesis; D-glycero-D-manno-heptose 7-phosphate biosynthesis; D-glycero-alpha-D-manno-heptose 7-phosphate and D-glycero-beta-D-manno-heptose 7-phosphate from sedoheptulose 7-phosphate: step 1/1. Catalyzes the isomerization of sedoheptulose 7-phosphate in D-glycero-D-manno-heptose 7-phosphate. This chain is Phosphoheptose isomerase, found in Aquifex aeolicus (strain VF5).